We begin with the raw amino-acid sequence, 323 residues long: tRNA dimethylallyltransferase (323 aa).

12–19 is an ATP binding site; sequence GPTAAGKT. 14–19 serves as a coordination point for substrate; it reads TAAGKT. Interaction with substrate tRNA regions lie at residues 37–40 and 161–165; these read DSAL and QRLMR.

Belongs to the IPP transferase family. Monomer. It depends on Mg(2+) as a cofactor.

It catalyses the reaction adenosine(37) in tRNA + dimethylallyl diphosphate = N(6)-dimethylallyladenosine(37) in tRNA + diphosphate. Its function is as follows. Catalyzes the transfer of a dimethylallyl group onto the adenine at position 37 in tRNAs that read codons beginning with uridine, leading to the formation of N6-(dimethylallyl)adenosine (i(6)A). In Pseudomonas aeruginosa (strain LESB58), this protein is tRNA dimethylallyltransferase.